The primary structure comprises 234 residues: Uridylate kinase (234 aa).

9–12 (KLSG) is a binding site for ATP. Glycine 51 serves as a coordination point for UMP. The ATP site is built by glycine 52 and arginine 56. Residues aspartate 71 and 132–139 (CGNPFFTT) each bind UMP. Threonine 159, tyrosine 165, and aspartate 168 together coordinate ATP.

This sequence belongs to the UMP kinase family. In terms of assembly, homohexamer.

It is found in the cytoplasm. It carries out the reaction UMP + ATP = UDP + ADP. Its pathway is pyrimidine metabolism; CTP biosynthesis via de novo pathway; UDP from UMP (UMPK route): step 1/1. With respect to regulation, inhibited by UTP. Catalyzes the reversible phosphorylation of UMP to UDP. This is Uridylate kinase from Prochlorococcus marinus (strain MIT 9312).